Here is a 328-residue protein sequence, read N- to C-terminus: Gonadotropin-releasing hormone receptor (328 aa).

Residues 1-38 lie on the Extracellular side of the membrane; the sequence is MANSASPEQNQNHCSAINSSILLTQGNLPTLTLSGKIR. Asn-18 is a glycosylation site (N-linked (GlcNAc...) asparagine). Residues 39–58 traverse the membrane as a helical segment; that stretch reads VTVTFFLFLLSTAFNASFLL. Topologically, residues 59–77 are cytoplasmic; sequence KLQKWTQRKEKGKKLSRMK. Residues 78–97 traverse the membrane as a helical segment; the sequence is VLLKHLTLANLLETLIVMPL. Residues 98 to 115 lie on the Extracellular side of the membrane; it reads DGMWNITVQWYAGEFLCK. A glycan (N-linked (GlcNAc...) asparagine) is linked at Asn-102. A disulfide bond links Cys-114 and Cys-196. A helical transmembrane segment spans residues 116–137; it reads VLSYLKLFSMYAPAFMMVVISL. The Cytoplasmic segment spans residues 138–164; it reads DRSLAITRPLAVKSNSRLGRFMIGLAW. Residues 165 to 184 form a helical membrane-spanning segment; it reads LLSSIFAGPQLYIFRMIHLA. Residues 185–212 are Extracellular-facing; it reads DSSGQTEGFSQCVTHGSFPQWWHQAFYN. A helical membrane pass occupies residues 213-232; that stretch reads FFTFSCLFIIPLLIMLICNA. The Cytoplasmic segment spans residues 233–281; it reads KIMFTLTRVLQQDPHNLQLNQSKNNIPRARLRTLKMTVAFAASFIVCWT. A helical transmembrane segment spans residues 282 to 300; sequence PYYVLGIWYWFDPEMVNRV. Over 301–306 the chain is Extracellular; the sequence is SDPVNH. The helical transmembrane segment at 307–326 threads the bilayer; the sequence is FFFLFAFLNPCFDPLIYGYF. Residues 327 to 328 lie on the Cytoplasmic side of the membrane; that stretch reads SL.

It belongs to the G-protein coupled receptor 1 family. As to expression, pituitary gland.

Its subcellular location is the cell membrane. Functionally, receptor for gonadotropin releasing hormone (GnRH) that mediates the action of GnRH to stimulate the secretion of the gonadotropic hormones luteinizing hormone (LH) and follicle-stimulating hormone (FSH). This receptor mediates its action by association with G-proteins that activate a phosphatidylinositol-calcium second messenger system. This Sus scrofa (Pig) protein is Gonadotropin-releasing hormone receptor (GNRHR).